Reading from the N-terminus, the 29-residue chain is Brevinin-2Tc (29 aa).

A disulfide bridge connects residues Cys-23 and Cys-29.

The protein belongs to the frog skin active peptide (FSAP) family. Brevinin subfamily. In terms of tissue distribution, expressed by the skin glands.

It is found in the secreted. Antibacterial activity against representative Gram-negative and Gram-positive bacteria. This chain is Brevinin-2Tc, found in Rana temporaria (European common frog).